The sequence spans 263 residues: Hydroxyacylglutathione hydrolase (263 aa).

Residues His55, His57, Asp59, His60, His117, Asp134, and His172 each contribute to the Zn(2+) site.

It belongs to the metallo-beta-lactamase superfamily. Glyoxalase II family. As to quaternary structure, monomer. Requires Zn(2+) as cofactor.

The catalysed reaction is an S-(2-hydroxyacyl)glutathione + H2O = a 2-hydroxy carboxylate + glutathione + H(+). The protein operates within secondary metabolite metabolism; methylglyoxal degradation; (R)-lactate from methylglyoxal: step 2/2. Its function is as follows. Thiolesterase that catalyzes the hydrolysis of S-D-lactoyl-glutathione to form glutathione and D-lactic acid. The protein is Hydroxyacylglutathione hydrolase of Shewanella baltica (strain OS195).